The primary structure comprises 224 residues: Probable proteasome subunit beta type-4 (224 aa).

The protein belongs to the peptidase T1B family. The 26S proteasome consists of a 20S proteasome core and two 19S regulatory subunits. The 20S proteasome core is composed of 28 subunits that are arranged in four stacked rings, resulting in a barrel-shaped structure. The two end rings are each formed by seven alpha subunits, and the two central rings are each formed by seven beta subunits. The catalytic chamber with the active sites is on the inside of the barrel.

It localises to the cytoplasm. The protein localises to the nucleus. Functionally, non-catalytic component of the proteasome, a multicatalytic proteinase complex which is characterized by its ability to cleave peptides with Arg, Phe, Tyr, Leu, and Glu adjacent to the leaving group at neutral or slightly basic pH. The proteasome has an ATP-dependent proteolytic activity. The polypeptide is Probable proteasome subunit beta type-4 (CPR1) (Cryptococcus neoformans var. neoformans serotype D (strain B-3501A) (Filobasidiella neoformans)).